The following is a 224-amino-acid chain: Ribose-5-phosphate isomerase A (224 aa).

Substrate contacts are provided by residues 32-35 (TGST), 85-88 (DGAD), and 98-101 (KGGG). Catalysis depends on Glu-107, which acts as the Proton acceptor. Residue Lys-125 participates in substrate binding.

The protein belongs to the ribose 5-phosphate isomerase family. Homodimer.

It catalyses the reaction aldehydo-D-ribose 5-phosphate = D-ribulose 5-phosphate. It functions in the pathway carbohydrate degradation; pentose phosphate pathway; D-ribose 5-phosphate from D-ribulose 5-phosphate (non-oxidative stage): step 1/1. Functionally, catalyzes the reversible conversion of ribose-5-phosphate to ribulose 5-phosphate. The polypeptide is Ribose-5-phosphate isomerase A (Pseudomonas putida (strain ATCC 700007 / DSM 6899 / JCM 31910 / BCRC 17059 / LMG 24140 / F1)).